Consider the following 449-residue polypeptide: Capsid protein (449 aa).

Residues 1 to 43 (MERRARRPRGRFYAFRRGRWNHLKRLRRRYKFRHRRRQRYRRR) form a DNA-binding region. The tract at residues 6–47 (RRPRGRFYAFRRGRWNHLKRLRRRYKFRHRRRQRYRRRAFRK) is nuclear localization signals.

Belongs to the gyrovirus capsid protein family. In terms of assembly, homomultimer (Potential). Interacts with Rep; this interaction relocates Rep into the nucleus.

It localises to the host nucleus. The protein resides in the virion. Its function is as follows. Self-assembles to form the virion icosahedral capsid with a T=1 symmetry. This very small capsid (25 nm in diameter) allows the virus to be very stable in the environment and resistant to some disinfectants, including detergents. Essential for the initial attachment to host receptors. After attachment, the virus is endocytosed and traffics to the nucleus. The capsid protein binds and transports the viral genome and Rep across the nuclear envelope. This chain is Capsid protein (VP1), found in Chicken anemia virus (isolate Japan 82-2) (CAV).